Reading from the N-terminus, the 324-residue chain is ATP-dependent 6-phosphofructokinase (324 aa).

Gly11 contributes to the ATP binding site. Residue 21-25 participates in ADP binding; the sequence is RAVVR. Residues 72–73 and 102–105 contribute to the ATP site; these read RE and GNGS. Asn103 contributes to the Mg(2+) binding site. 126–128 contributes to the substrate binding site; that stretch reads TID. The Proton acceptor role is filled by Asp128. Arg155 lines the ADP pocket. Residues Arg163 and 170–172 each bind substrate; that span reads MGR. Residues 186–188, Arg212, and 214–216 contribute to the ADP site; these read GAD and KKF. Substrate-binding positions include Glu223, Arg248, and 254–257; that span reads YIQR.

It belongs to the phosphofructokinase type A (PFKA) family. ATP-dependent PFK group I subfamily. Prokaryotic clade 'B1' sub-subfamily. In terms of assembly, homotetramer. It depends on Mg(2+) as a cofactor.

The protein resides in the cytoplasm. It catalyses the reaction beta-D-fructose 6-phosphate + ATP = beta-D-fructose 1,6-bisphosphate + ADP + H(+). The protein operates within carbohydrate degradation; glycolysis; D-glyceraldehyde 3-phosphate and glycerone phosphate from D-glucose: step 3/4. With respect to regulation, allosterically activated by ADP and other diphosphonucleosides, and allosterically inhibited by phosphoenolpyruvate. Functionally, catalyzes the phosphorylation of D-fructose 6-phosphate to fructose 1,6-bisphosphate by ATP, the first committing step of glycolysis. The polypeptide is ATP-dependent 6-phosphofructokinase (Persephonella marina (strain DSM 14350 / EX-H1)).